Here is a 275-residue protein sequence, read N- to C-terminus: Dermonecrotic toxin LhSicTox-alphaVI1ii (275 aa).

His5 is a catalytic residue. Mg(2+)-binding residues include Glu25 and Asp27. His41 functions as the Nucleophile in the catalytic mechanism. 2 disulfide bridges follow: Cys45-Cys51 and Cys47-Cys192. Position 85 (Asp85) interacts with Mg(2+).

Belongs to the arthropod phospholipase D family. Class II subfamily. Requires Mg(2+) as cofactor. As to expression, expressed by the venom gland.

Its subcellular location is the secreted. It carries out the reaction an N-(acyl)-sphingosylphosphocholine = an N-(acyl)-sphingosyl-1,3-cyclic phosphate + choline. It catalyses the reaction an N-(acyl)-sphingosylphosphoethanolamine = an N-(acyl)-sphingosyl-1,3-cyclic phosphate + ethanolamine. The catalysed reaction is a 1-acyl-sn-glycero-3-phosphocholine = a 1-acyl-sn-glycero-2,3-cyclic phosphate + choline. The enzyme catalyses a 1-acyl-sn-glycero-3-phosphoethanolamine = a 1-acyl-sn-glycero-2,3-cyclic phosphate + ethanolamine. In terms of biological role, dermonecrotic toxins cleave the phosphodiester linkage between the phosphate and headgroup of certain phospholipids (sphingolipid and lysolipid substrates), forming an alcohol (often choline) and a cyclic phosphate. This toxin acts on sphingomyelin (SM). It may also act on ceramide phosphoethanolamine (CPE), lysophosphatidylcholine (LPC) and lysophosphatidylethanolamine (LPE), but not on lysophosphatidylserine (LPS), and lysophosphatidylglycerol (LPG). It acts by transphosphatidylation, releasing exclusively cyclic phosphate products as second products. Induces dermonecrosis, hemolysis, increased vascular permeability, edema, inflammatory response, and platelet aggregation. The sequence is that of Dermonecrotic toxin LhSicTox-alphaVI1ii from Loxosceles hirsuta (Recluse spider).